Consider the following 107-residue polypeptide: UPF0145 protein YbjQ (107 aa).

It belongs to the UPF0145 family.

The protein is UPF0145 protein YbjQ of Escherichia coli O139:H28 (strain E24377A / ETEC).